We begin with the raw amino-acid sequence, 380 residues long: DNA primase small subunit PriS (380 aa).

Residues Asp103, Asp105, and Asp284 contribute to the active site.

This sequence belongs to the eukaryotic-type primase small subunit family. Heterodimer of a small subunit (PriS) and a large subunit (PriL). It depends on Mg(2+) as a cofactor. The cofactor is Mn(2+).

Functionally, catalytic subunit of DNA primase, an RNA polymerase that catalyzes the synthesis of short RNA molecules used as primers for DNA polymerase during DNA replication. The small subunit contains the primase catalytic core and has DNA synthesis activity on its own. Binding to the large subunit stabilizes and modulates the activity, increasing the rate of DNA synthesis while decreasing the length of the DNA fragments, and conferring RNA synthesis capability. The DNA polymerase activity may enable DNA primase to also catalyze primer extension after primer synthesis. May also play a role in DNA repair. In Methanocorpusculum labreanum (strain ATCC 43576 / DSM 4855 / Z), this protein is DNA primase small subunit PriS.